A 379-amino-acid polypeptide reads, in one-letter code: L-lactate dehydrogenase (379 aa).

Positions 1–379 (MIISSSTDYR…ITSELLVREP (379 aa)) constitute an FMN hydroxy acid dehydrogenase domain. A substrate-binding site is contributed by Tyr24. Residues Ser106 and Gln127 each contribute to the FMN site. Tyr129 contacts substrate. Thr155 contributes to the FMN binding site. Residue Arg164 coordinates substrate. Lys251 contributes to the FMN binding site. His275 (proton acceptor) is an active-site residue. Substrate is bound at residue Arg278. Residue 306–330 (DSGIRSGLDVVRMIALGADAAMLGR) participates in FMN binding.

It belongs to the FMN-dependent alpha-hydroxy acid dehydrogenase family. It depends on FMN as a cofactor.

It localises to the cell membrane. The catalysed reaction is (S)-lactate + A = pyruvate + AH2. Functionally, catalyzes the conversion of L-lactate to pyruvate. Is coupled to the respiratory chain. The polypeptide is L-lactate dehydrogenase (Alcaligenes faecalis).